Consider the following 241-residue polypeptide: Putative lipoprotein YvcA (241 aa).

The N-terminal stretch at 1–18 is a signal peptide; it reads MKKIIFICFSLLLALTGG. A lipid anchor (N-palmitoyl cysteine) is attached at Cys19. Residue Cys19 is the site of S-diacylglycerol cysteine attachment. The tract at residues 22 to 48 is disordered; that stretch reads NDNDKNSTNDNKTEAVKPKDMDPKDLP. Basic and acidic residues predominate over residues 23–46; it reads DNDKNSTNDNKTEAVKPKDMDPKD.

It localises to the cell membrane. Required for complex colony architecture. The polypeptide is Putative lipoprotein YvcA (yvcA) (Bacillus subtilis (strain 168)).